Consider the following 481-residue polypeptide: Cis-aconitate decarboxylase (481 aa).

Residues 462 to 481 (SPPEVASNSPACNNSITNLS) form a disordered region. Residues 467–481 (ASNSPACNNSITNLS) are compositionally biased toward polar residues.

Belongs to the PrpD family. As to quaternary structure, homodimer. In terms of tissue distribution, expressed in LPS-tolerized macrophages (at protein level). Expressed in peripheral blood mononuclear cells (PBMCs), microglia and macrophage cells.

The protein localises to the mitochondrion. The enzyme catalyses cis-aconitate + H(+) = itaconate + CO2. Its function is as follows. Cis-aconitate decarboxylase that catalyzes production of itaconate and is involved in the inhibition of the inflammatory response. Acts as a negative regulator of the Toll-like receptors (TLRs)-mediated inflammatory innate response by stimulating the tumor necrosis factor alpha-induced protein TNFAIP3 expression via reactive oxygen species (ROS) in LPS-tolerized macrophages. Involved in antimicrobial response of innate immune cells; ACOD1-mediated itaconic acid production contributes to the antimicrobial activity of macrophages by generating itaconate, leading to alkylation of proteins, such as TFEB. Involved in antiviral response following infection by flavivirus in neurons: ACOD1-mediated itaconate production inhibits the activity of succinate dehydrogenase, generating a metabolic state in neurons that suppresses replication of viral genomes. Plays a role in the embryo implantation. The chain is Cis-aconitate decarboxylase from Homo sapiens (Human).